Here is a 437-residue protein sequence, read N- to C-terminus: UDP-N-acetylmuramoylalanine--D-glutamate ligase (437 aa).

An ATP-binding site is contributed by 112–118 (GSNGKST).

This sequence belongs to the MurCDEF family.

Its subcellular location is the cytoplasm. It catalyses the reaction UDP-N-acetyl-alpha-D-muramoyl-L-alanine + D-glutamate + ATP = UDP-N-acetyl-alpha-D-muramoyl-L-alanyl-D-glutamate + ADP + phosphate + H(+). The protein operates within cell wall biogenesis; peptidoglycan biosynthesis. Functionally, cell wall formation. Catalyzes the addition of glutamate to the nucleotide precursor UDP-N-acetylmuramoyl-L-alanine (UMA). This Haemophilus influenzae (strain 86-028NP) protein is UDP-N-acetylmuramoylalanine--D-glutamate ligase.